The chain runs to 148 residues: Putative HTH-type transcriptional regulator NMA1593 (148 aa).

The HTH rrf2-type domain maps to 2-131 (RLTTKGRFAV…GSVTLQSIIE (130 aa)).

In Neisseria meningitidis serogroup A / serotype 4A (strain DSM 15465 / Z2491), this protein is Putative HTH-type transcriptional regulator NMA1593.